Consider the following 189-residue polypeptide: 3-hydroxyanthranilate 3,4-dioxygenase (189 aa).

Position 49 (R49) interacts with O2. Fe cation is bound by residues H53, E59, and H97. E59 contributes to the substrate binding site. Substrate is bound by residues R101 and E112. Fe cation contacts are provided by C127, C130, C165, and C168.

It belongs to the 3-HAO family. As to quaternary structure, homodimer. Fe(2+) is required as a cofactor.

The enzyme catalyses 3-hydroxyanthranilate + O2 = (2Z,4Z)-2-amino-3-carboxymuconate 6-semialdehyde. It functions in the pathway cofactor biosynthesis; NAD(+) biosynthesis; quinolinate from L-kynurenine: step 3/3. Its function is as follows. Catalyzes the oxidative ring opening of 3-hydroxyanthranilate to 2-amino-3-carboxymuconate semialdehyde, which spontaneously cyclizes to quinolinate. This Cupriavidus pinatubonensis (strain JMP 134 / LMG 1197) (Cupriavidus necator (strain JMP 134)) protein is 3-hydroxyanthranilate 3,4-dioxygenase.